Here is a 458-residue protein sequence, read N- to C-terminus: Phosphoglucosamine mutase (458 aa).

Ser-106 acts as the Phosphoserine intermediate in catalysis. The Mg(2+) site is built by Ser-106, Asp-247, Asp-249, and Asp-251. At Ser-106 the chain carries Phosphoserine.

This sequence belongs to the phosphohexose mutase family. Mg(2+) serves as cofactor. In terms of processing, activated by phosphorylation.

It carries out the reaction alpha-D-glucosamine 1-phosphate = D-glucosamine 6-phosphate. In terms of biological role, catalyzes the conversion of glucosamine-6-phosphate to glucosamine-1-phosphate. This chain is Phosphoglucosamine mutase, found in Chlamydia felis (strain Fe/C-56) (Chlamydophila felis).